Reading from the N-terminus, the 36-residue chain is Termicin (36 aa).

Intrachain disulfides connect Cys2–Cys24, Cys7–Cys29, and Cys11–Cys31. The residue at position 36 (Gly36) is a Glycine amide.

In terms of tissue distribution, expressed in salivary glands and hemocytes.

It localises to the secreted. Functionally, weak activity against Gram-positive bacteria B.megaterium, S.pyogenes and M.luteus, strong activity against yeasts C.albicans, C.neoformans and S.cerevisiae and filamentous fungi F.oxysporum, F.culmorum, N.crassa and N.hematococca. Less active against filamentous fungus T.viride. Inactive against Gram-positive bacteria A.viridans and S.aureus, filamentous fungi A.fumigatus and B.bassiana and yeast C.glabrata. This Pseudacanthotermes spiniger protein is Termicin.